The chain runs to 248 residues: Triosephosphate isomerase (248 aa).

Residue 9–11 (NWK) participates in substrate binding. Catalysis depends on H94, which acts as the Electrophile. Residue E166 is the Proton acceptor of the active site. Substrate is bound by residues G172, S212, and 233 to 234 (GG).

Belongs to the triosephosphate isomerase family. Homodimer.

It is found in the cytoplasm. It catalyses the reaction D-glyceraldehyde 3-phosphate = dihydroxyacetone phosphate. It participates in carbohydrate biosynthesis; gluconeogenesis. It functions in the pathway carbohydrate degradation; glycolysis; D-glyceraldehyde 3-phosphate from glycerone phosphate: step 1/1. Its function is as follows. Involved in the gluconeogenesis. Catalyzes stereospecifically the conversion of dihydroxyacetone phosphate (DHAP) to D-glyceraldehyde-3-phosphate (G3P). This chain is Triosephosphate isomerase, found in Thermoanaerobacter pseudethanolicus (strain ATCC 33223 / 39E) (Clostridium thermohydrosulfuricum).